The sequence spans 406 residues: Protein PHYTOCHROME KINASE SUBSTRATE 4 (406 aa).

The span at 106-119 (SWNSQTGLLSNKNR) shows a compositional bias: polar residues. The tract at residues 106–133 (SWNSQTGLLSNKNRQGSDRDGRRSSKKG) is disordered.

It belongs to the PKS family. In terms of assembly, interacts in vitro with PHYA and PHYB. Expressed in the hypocotyl elongation zone. Not found in the root elongation zone.

Modulates phytochrome-mediated control of hypocotyl growth orientation. Involved in PHYA and PHYB signaling. Acts as an inhibitor of asymmetric growth. Not involved in the control of leaf flattening. The polypeptide is Protein PHYTOCHROME KINASE SUBSTRATE 4 (PKS4) (Arabidopsis thaliana (Mouse-ear cress)).